The chain runs to 235 residues: C-type lectin domain family 2 member D-related protein (235 aa).

The segment at 1–50 is disordered; sequence MPSSAHLQDPPPHLSRTLTQDEEQTSLRQSSSCGPSTTSASASESLSGST. At 1–75 the chain is on the cytoplasmic side; it reads MPSSAHLQDP…KIIPTESAAK (75 aa). The span at 30-50 shows a compositional bias: low complexity; sequence SSSCGPSTTSASASESLSGST. Residues 76 to 96 traverse the membrane as a helical; Signal-anchor for type II membrane protein segment; that stretch reads LLCCYAVFMALTVVVIALSIA. The Extracellular segment spans residues 97-235; the sequence is LSVKKTPQIS…KLNSYTSQCP (139 aa). In terms of domain architecture, C-type lectin spans 121 to 232; it reads FGNKCYYFNE…ICSKLNSYTS (112 aa). An N-linked (GlcNAc...) asparagine glycan is attached at Asn-134.

The protein resides in the cell membrane. Functionally, lectin-type cell surface receptor. The chain is C-type lectin domain family 2 member D-related protein from Rattus norvegicus (Rat).